Here is a 213-residue protein sequence, read N- to C-terminus: Probable transaldolase (213 aa).

The active-site Schiff-base intermediate with substrate is lysine 83.

The protein belongs to the transaldolase family. Type 3B subfamily.

It is found in the cytoplasm. The catalysed reaction is D-sedoheptulose 7-phosphate + D-glyceraldehyde 3-phosphate = D-erythrose 4-phosphate + beta-D-fructose 6-phosphate. It functions in the pathway carbohydrate degradation; pentose phosphate pathway; D-glyceraldehyde 3-phosphate and beta-D-fructose 6-phosphate from D-ribose 5-phosphate and D-xylulose 5-phosphate (non-oxidative stage): step 2/3. Transaldolase is important for the balance of metabolites in the pentose-phosphate pathway. The sequence is that of Probable transaldolase from Desulfitobacterium hafniense (strain DSM 10664 / DCB-2).